The following is a 160-amino-acid chain: Phosphopantetheine adenylyltransferase (160 aa).

T10 is a substrate binding site. Residues T10–F11 and H18 contribute to the ATP site. Substrate contacts are provided by K42, M74, and R88. Residues G89–R91, E99, and W124–T130 each bind ATP.

This sequence belongs to the bacterial CoaD family. In terms of assembly, homohexamer. The cofactor is Mg(2+).

The protein resides in the cytoplasm. The catalysed reaction is (R)-4'-phosphopantetheine + ATP + H(+) = 3'-dephospho-CoA + diphosphate. It participates in cofactor biosynthesis; coenzyme A biosynthesis; CoA from (R)-pantothenate: step 4/5. Its function is as follows. Reversibly transfers an adenylyl group from ATP to 4'-phosphopantetheine, yielding dephospho-CoA (dPCoA) and pyrophosphate. In Sodalis glossinidius (strain morsitans), this protein is Phosphopantetheine adenylyltransferase.